Reading from the N-terminus, the 424-residue chain is MPVHLAINNGTPVRTRPWPVWPQPARGALDALERVLRSGRWAISGPYRGIESAERRFARDFAAYNGVAHCVPAASGTASLMLALESCGVGVGDEVIAPGLSWVASASTIVGVNAVPVLVDIDPRTLCLDPAAVEAAITPATKAVVVVHLYSAVADLDALRAVADRHGLPLIEDCAQAHGAEHRGRKVGSVGDVGTFSMQHSKVLTSGEGGAAITNSAELARRMEHLRADGRCYPDTAPAPGRMELVETGELMGSNRCLSEFQAAVLVEQLRELDEQNALRRRNAELLNTLLAEQGLRPQATSPGTTSRTYYVYAAELPDDAFVGLPITTVTEALTAELGFPISPAYAPLHTNRLYAPASRRRFALGEEHEKRIDPARFHLPVCERLTRRLITFHHAALLGDESDMHDIAAAVAKVLRHHGELRA.

Lysine 202 carries the N6-(pyridoxal phosphate)lysine modification.

Belongs to the DegT/DnrJ/EryC1 family. L-glutamine:2-deoxy-scyllo-inosose/scyllo-inosose aminotransferase subfamily. The cofactor is pyridoxal 5'-phosphate.

It carries out the reaction 2-deoxy-L-scyllo-inosose + L-glutamine = 2-deoxy-scyllo-inosamine + 2-oxoglutaramate. The catalysed reaction is 3-amino-2,3-dideoxy-scyllo-inosose + L-glutamine = 2-deoxystreptamine + 2-oxoglutaramate. It functions in the pathway metabolic intermediate biosynthesis; 2-deoxystreptamine biosynthesis; 2-deoxystreptamine from D-glucose 6-phosphate: step 2/4. Its pathway is antibiotic biosynthesis; tobramycin biosynthesis. Functionally, catalyzes the PLP-dependent transamination of 2-deoxy-scyllo-inosose (2-DOI) to form 2-deoxy-scyllo-inosamine (2-DOIA) using L-glutamine as the amino donor. Also catalyzes the transamination of 3-amino-2,3-dideoxy-scyllo-inosose (keto-2-DOIA) into 2-deoxystreptamine (2-DOS). The protein is L-glutamine:2-deoxy-scyllo-inosose aminotransferase (tbmB) of Streptoalloteichus tenebrarius (strain ATCC 17920 / DSM 40477 / JCM 4838 / CBS 697.72 / NBRC 16177 / NCIMB 11028 / NRRL B-12390 / A12253. 1 / ISP 5477) (Streptomyces tenebrarius).